Consider the following 542-residue polypeptide: MTARRTRWTRRTDRSLPIRSAAAAVAFAAGATACSAPTGGGGDGGTEAAESVVIGVASEPDTLSPLLGYGKDGNSKIFDGLLARDTDLELKPALAAALPKVTDDGRTITFTLREGVNFSDGEPLTAGDVYTYRTVLDEKTNNTARSELDAVRERSARADGTVVFTLKYPYAPFAARTVLPIVPEHVAGKQDPNTGDFNTEPVGTGPYVLTGWSKGEKLGFRANPHYWGDKPAVKSFTMAVTADDNVRATRLRSGDLDGAVLPPNLAATFEKDDGRRTYRARSYDFRAVTLPSAGQVTGDRAIRRALDAAVDRQAMVDKILDGAGRPAYGPLPVDDPWYERGIERPRDLAAAGRILDEAGWKPGSGGIRARDGQRASFTLYYPSGDKVRQDHALAYASDAKKAGIEVKVEGATWEVIEPRMKTDAVLADLGSVGDPDFGLYTLLHSTLAGDGFNNMAHYANPAVDEALDAGRRSQDPKVRAAAYREIQKALVADPGYTFLTHIDHLYVLADRWDGLTTQLEGRTNTASPAGPGGTSRTGGRKK.

Residues 1–33 (MTARRTRWTRRTDRSLPIRSAAAAVAFAAGATA) form the signal peptide. The N-palmitoyl cysteine moiety is linked to residue C34. Residue C34 is the site of S-diacylglycerol cysteine attachment. A disordered region spans residues 519 to 542 (LEGRTNTASPAGPGGTSRTGGRKK).

It belongs to the bacterial solute-binding protein 5 family.

The protein localises to the cell membrane. Its function is as follows. Required for transport of an unidentified substrate. This chain is Protein XP55 (xp55), found in Streptomyces lividans.